The following is a 267-amino-acid chain: L-erythrulose-1-phosphate isomerase (267 aa).

The active-site Electrophile is His95. Glu168 serves as the catalytic Proton acceptor. Substrate-binding residues include Gly174 and Ser211.

Belongs to the triosephosphate isomerase family. Homodimer.

Its subcellular location is the cytoplasm. It catalyses the reaction L-erythrulose 1-phosphate = D-erythrulose 4-phosphate. It functions in the pathway carbohydrate metabolism; erythritol degradation. Functionally, catalyzes the isomerization of D-erythrulose-4P to L-erythrulose-1P. This Rhizobium etli (strain ATCC 51251 / DSM 11541 / JCM 21823 / NBRC 15573 / CFN 42) protein is L-erythrulose-1-phosphate isomerase.